A 280-amino-acid chain; its full sequence is GTP-binding protein rhoC (280 aa).

Residues 13–59 (TSRRHSLVTPPPSVAPRQNRMRSQSVRVSNGTVSTDNSMSSGRVSEA) form a disordered region. A compositionally biased stretch (polar residues) spans 33-59 (MRSQSVRVSNGTVSTDNSMSSGRVSEA). A GTP-binding site is contributed by 76–83 (GDGGCGKT). The Effector region signature appears at 98-106 (YVPTVFENY). GTP is bound by residues 125–129 (DTAGQ) and 183–186 (LKSD). Positions 251 to 275 (WDTRLPSSSGKPGGKPIGGKKIKKR) are disordered. A Cysteine methyl ester modification is found at cysteine 277. Cysteine 277 carries S-geranylgeranyl cysteine lipidation. Residues 278–280 (KIL) constitute a propeptide, removed in mature form.

Belongs to the small GTPase superfamily. Rho family.

Its subcellular location is the cell membrane. The sequence is that of GTP-binding protein rhoC (rhoC) from Emericella nidulans (strain FGSC A4 / ATCC 38163 / CBS 112.46 / NRRL 194 / M139) (Aspergillus nidulans).